The primary structure comprises 73 residues: Small ribosomal subunit protein bS18c (73 aa).

Belongs to the bacterial ribosomal protein bS18 family. In terms of assembly, part of the 30S ribosomal subunit.

The protein resides in the plastid. It is found in the chloroplast. This Rhodomonas salina (Cryptomonas salina) protein is Small ribosomal subunit protein bS18c.